A 294-amino-acid polypeptide reads, in one-letter code: 4-hydroxy-tetrahydrodipicolinate synthase (294 aa).

A pyruvate-binding site is contributed by T45. Y133 acts as the Proton donor/acceptor in catalysis. Catalysis depends on K161, which acts as the Schiff-base intermediate with substrate. I203 is a binding site for pyruvate.

Belongs to the DapA family. In terms of assembly, homotetramer; dimer of dimers.

Its subcellular location is the cytoplasm. It carries out the reaction L-aspartate 4-semialdehyde + pyruvate = (2S,4S)-4-hydroxy-2,3,4,5-tetrahydrodipicolinate + H2O + H(+). The protein operates within amino-acid biosynthesis; L-lysine biosynthesis via DAP pathway; (S)-tetrahydrodipicolinate from L-aspartate: step 3/4. Its function is as follows. Catalyzes the condensation of (S)-aspartate-beta-semialdehyde [(S)-ASA] and pyruvate to 4-hydroxy-tetrahydrodipicolinate (HTPA). This chain is 4-hydroxy-tetrahydrodipicolinate synthase, found in Shewanella baltica (strain OS223).